The chain runs to 529 residues: Amino acid transporter heavy chain SLC3A2 (529 aa).

A disordered region spans residues 1–20 (MSQDTEVDMKEVELNELEPE). At 1–84 (MSQDTEVDMK…SPGWVRTRWA (84 aa)) the chain is on the cytoplasmic side. Residue S2 is modified to Phosphoserine. The residue at position 5 (T5) is a Phosphothreonine. The segment covering 7-20 (VDMKEVELNELEPE) has biased composition (basic and acidic residues). A Glycyl lysine isopeptide (Lys-Gly) (interchain with G-Cter in ubiquitin) cross-link involves residue K49. S65 carries the post-translational modification Phosphoserine. A Glycyl lysine isopeptide (Lys-Gly) (interchain with G-Cter in SUMO2) cross-link involves residue K66. The helical; Signal-anchor for type II membrane protein transmembrane segment at 85–105 (LLLLFWLGWIGMLAGAVVIIV) threads the bilayer. The Extracellular portion of the chain corresponds to 106 to 529 (RAPRCRELPV…GLLLHFPYVA (424 aa)). N-linked (GlcNAc...) asparagine glycosylation occurs at N266. Residues S307 and S309 each carry the phosphoserine modification. N-linked (GlcNAc...) asparagine glycosylation is found at N325 and N405. S426 is subject to Phosphoserine.

The protein belongs to the SLC3A transporter family. Disulfide-linked heterodimer with a non-glycosylated light chain (SLC7A5, SLC7A6, SLC7A7, SLC7A8, SLC7A10 or SLC7A11). Interacts with TLCD3A/CT120 and ICAM1. Constitutively and specifically associates with beta-1 integrins (alpha-2/beta-1, alpha-3/beta-1, alpha-5/beta-1 and alpha-6/beta-1), but minimally with alpha-4/beta-1. Interacts with LAPTM4B; recruits SLC3A2 and SLC7A5 to lysosomes to promote leucine uptake into these organelles and is required for mTORC1 activation. Phosphorylation on Ser-307 or Ser-309 and on Ser-426 by ecto-protein kinases favors heterotypic cell-cell interactions. In terms of processing, N-glycosylated; N-glycosylation is crucial for trafficking and stability of SLC3A2 to the plasma membrane.

The protein localises to the apical cell membrane. It localises to the cell membrane. Its subcellular location is the cell junction. It is found in the lysosome membrane. The protein resides in the melanosome. The protein localises to the basolateral cell membrane. Functionally, acts as a chaperone that facilitates biogenesis and trafficking of functional transporters heterodimers to the plasma membrane. Forms heterodimer with SLC7 family transporters (SLC7A5, SLC7A6, SLC7A7, SLC7A8, SLC7A10 and SLC7A11), a group of amino-acid antiporters. Heterodimers function as amino acids exchangers, the specificity of the substrate depending on the SLC7A subunit. Heterodimers formed by SLC3A2/SLC7A6 or SLC3A2/SLC7A7 mediate the uptake of dibasic amino acids. Heterodimer SLC3A2/SLC7A11 functions as an antiporter by mediating the exchange of extracellular anionic L-cystine and intracellular L-glutamate across the cellular plasma membrane. SLC3A2/SLC7A10 translocates small neutral L- and D-amino acids across the plasma membrane. SLC3A2/SLC75 or SLC3A2/SLC7A8 translocates neutral amino acids with broad specificity, thyroid hormones and L-DOPA. SLC3A2 is essential for plasma membrane localization, stability, and the transport activity of SLC7A5 and SLC7A8. When associated with LAPTM4B, the heterodimer SLC7A5 is recruited to lysosomes to promote leucine uptake into these organelles, and thereby mediates mTORC1 activation. Modulates integrin-related signaling and is essential for integrin-dependent cell spreading, migration and tumor progression. The sequence is that of Amino acid transporter heavy chain SLC3A2 from Oryctolagus cuniculus (Rabbit).